The chain runs to 1353 residues: Xanthine dehydrogenase (1353 aa).

Residues 17 to 104 form the 2Fe-2S ferredoxin-type domain; that stretch reads STLIFFVNGK…GSAVTTVEGI (88 aa). [2Fe-2S] cluster is bound by residues Cys56, Cys61, Cys64, Cys86, Cys126, Cys129, Cys161, and Cys163. An FAD-binding PCMH-type domain is found at 245–434; that stretch reads YKGERATWYR…VGLYFPKTLE (190 aa). FAD is bound by residues 273-280, Phe353, 363-367, Asp376, Leu424, and Lys442; these read LVVGNTEI and SLGGN. Gln790 and Phe821 together coordinate Mo-molybdopterin. Glu825 and Arg903 together coordinate substrate. A Mo-molybdopterin-binding site is contributed by Arg935. Position 937 (Phe937) interacts with substrate. Ala1102 provides a ligand contact to Mo-molybdopterin. Glu1285 (proton acceptor) is an active-site residue.

This sequence belongs to the xanthine dehydrogenase family. In terms of assembly, homodimer. FAD is required as a cofactor. The cofactor is Mo-molybdopterin. Requires [2Fe-2S] cluster as cofactor.

Its subcellular location is the peroxisome. The catalysed reaction is xanthine + NAD(+) + H2O = urate + NADH + H(+). It catalyses the reaction hypoxanthine + NAD(+) + H2O = xanthine + NADH + H(+). Its function is as follows. Key enzyme in purine degradation. Catalyzes the oxidation of hypoxanthine to xanthine. Catalyzes the oxidation of xanthine to uric acid. The polypeptide is Xanthine dehydrogenase (XDH) (Calliphora vicina (Blue blowfly)).